The primary structure comprises 132 residues: Aspartate 1-decarboxylase (132 aa).

The Schiff-base intermediate with substrate; via pyruvic acid role is filled by S25. S25 carries the post-translational modification Pyruvic acid (Ser). T57 serves as a coordination point for substrate. Y58 functions as the Proton donor in the catalytic mechanism. 73 to 75 (GAA) contributes to the substrate binding site.

The protein belongs to the PanD family. Heterooctamer of four alpha and four beta subunits. It depends on pyruvate as a cofactor. In terms of processing, is synthesized initially as an inactive proenzyme, which is activated by self-cleavage at a specific serine bond to produce a beta-subunit with a hydroxyl group at its C-terminus and an alpha-subunit with a pyruvoyl group at its N-terminus.

It is found in the cytoplasm. It carries out the reaction L-aspartate + H(+) = beta-alanine + CO2. It functions in the pathway cofactor biosynthesis; (R)-pantothenate biosynthesis; beta-alanine from L-aspartate: step 1/1. Functionally, catalyzes the pyruvoyl-dependent decarboxylation of aspartate to produce beta-alanine. This is Aspartate 1-decarboxylase from Heliobacterium modesticaldum (strain ATCC 51547 / Ice1).